A 366-amino-acid polypeptide reads, in one-letter code: MITLQRTPLFDVYAKYGGKTIDFGGWELPVQFSSIKEEHEAVRTAAGLFDVSHMGEVEVKGVDSLAFLQRVVTNDVSTLKVGGAQYTAMCYENGGTVDDLLIYKRGEEDYLLVINASNIEKDYEWLASHVIGDATVVNVSSEVAQLAIQGPKAEGILQKVVSEDLKEIKFFKFKNDILVDGIPALVSRTGYTGEDGFEIYCKSEDAAKLWEKLLEVGAEEGLKPCGLGARDTLRFEATLPLYGQELSKDITPVEAGIGFAVKPNKEADFFGKATLKEQKENGAPRKLVGIEVIERGIPRTHYPVFIGEEKIGEVTSGTQSPTLKKSIGLALIDVKYAAVDTEVEIEIRNKRVKAVVVPTPFYKRSK.

Belongs to the GcvT family. The glycine cleavage system is composed of four proteins: P, T, L and H.

It carries out the reaction N(6)-[(R)-S(8)-aminomethyldihydrolipoyl]-L-lysyl-[protein] + (6S)-5,6,7,8-tetrahydrofolate = N(6)-[(R)-dihydrolipoyl]-L-lysyl-[protein] + (6R)-5,10-methylene-5,6,7,8-tetrahydrofolate + NH4(+). In terms of biological role, the glycine cleavage system catalyzes the degradation of glycine. The sequence is that of Aminomethyltransferase from Bacillus cereus (strain ATCC 10987 / NRS 248).